The primary structure comprises 394 residues: Phosphoglycerate kinase (394 aa).

Substrate is bound by residues 21–23 (DFN), Arg36, 59–62 (HFGR), Arg118, and Arg151. ATP-binding positions include Lys201, Glu323, and 349-352 (GGDS).

It belongs to the phosphoglycerate kinase family. As to quaternary structure, monomer.

The protein localises to the cytoplasm. The catalysed reaction is (2R)-3-phosphoglycerate + ATP = (2R)-3-phospho-glyceroyl phosphate + ADP. The protein operates within carbohydrate degradation; glycolysis; pyruvate from D-glyceraldehyde 3-phosphate: step 2/5. The chain is Phosphoglycerate kinase from Brevibacillus brevis (strain 47 / JCM 6285 / NBRC 100599).